A 530-amino-acid polypeptide reads, in one-letter code: MFS transporter PfmaC (530 aa).

The tract at residues 41–76 (TTAVSDGDNQSSTMSGKTAAGDATSPASGSGSGGWF) is disordered. Over residues 42–56 (TAVSDGDNQSSTMSG) the composition is skewed to polar residues. Over residues 59 to 69 (AAGDATSPASG) the composition is skewed to low complexity. Transmembrane regions (helical) follow at residues 165–182 (YWLP…LGMY), 195–215 (FFIG…LGCW), 226–246 (ALFV…QAAL), 261–281 (WLFI…LFCF), 324–344 (IFTS…SLTV), 369–389 (NIPT…GFVS), 396–416 (GPVC…FTAW), 422–442 (LLMA…LLAG), 456–476 (AFIL…FQQL), and 493–513 (PSAL…IPLL).

This sequence belongs to the major facilitator superfamily. Allantoate permease family.

The protein localises to the cell membrane. Functionally, MFS transporter; part of the gene cluster that mediates the biosynthesis of dihydroxynaphthalene (DHN)-melanin, a bluish-green pigment forming a dark layer in the conidial wall that protects the conidia from UV radiations. The sequence is that of MFS transporter PfmaC from Pestalotiopsis fici (strain W106-1 / CGMCC3.15140).